The following is a 98-amino-acid chain: UPF0235 protein Pmen_4153 (98 aa).

Belongs to the UPF0235 family.

This is UPF0235 protein Pmen_4153 from Ectopseudomonas mendocina (strain ymp) (Pseudomonas mendocina).